A 697-amino-acid chain; its full sequence is MLLPLLLSSLLGGSQAMDGRFWIRVQESVMVPEGLCISVPCSFSYPRQDWTGSTPAYGYWFKAVTETTKGAPVATNHQSREVEMSTRGRFQLTGDPAKGNCSLVIRDAQMQDESQYFFRVERGSYVRYNFMNDGFFLKVTALTQKPDVYIPETLEPGQPVTVICVFNWAFEECPPPSFSWTGAALSSQGTKPTTSHFSVLSFTPRPQDHNTDLTCHVDFSRKGVSAQRTVRLRVAYAPRDLVISISRDNTPALEPQPQGNVPYLEAQKGQFLRLLCAADSQPPATLSWVLQNRVLSSSHPWGPRPLGLELPGVKAGDSGRYTCRAENRLGSQQRALDLSVQYPPENLRVMVSQANRTVLENLGNGTSLPVLEGQSLCLVCVTHSSPPARLSWTQRGQVLSPSQPSDPGVLELPRVQVEHEGEFTCHARHPLGSQHVSLSLSVHYSPKLLGPSCSWEAEGLHCSCSSQASPAPSLRWWLGEELLEGNSSQDSFEVTPSSAGPWANSSLSLHGGLSSGLRLRCEAWNVHGAQSGSILQLPDKKGLISTAFSNGAFLGIGITALLFLCLALIIMKILPKRRTQTETPRPRFSRHSTILDYINVVPTAGPLAQKRNQKATPNSPRTPLPPGAPSPESKKNQKKQYQLPSFPEPKSSTQAPESQESQEELHYATLNFPGVRPRPEARMPKGTQADYAEVKFQ.

An N-terminal signal peptide occupies residues 1-16; it reads MLLPLLLSSLLGGSQA. Topologically, residues 17–550 are extracellular; it reads MDGRFWIRVQ…KGLISTAFSN (534 aa). Positions 18 to 121 constitute an Ig-like V-type domain; that stretch reads DGRFWIRVQE…DESQYFFRVE (104 aa). 4 disulfides stabilise this stretch: cysteine 36/cysteine 173, cysteine 41/cysteine 101, cysteine 164/cysteine 215, and cysteine 276/cysteine 323. N-linked (GlcNAc...) asparagine glycosylation occurs at asparagine 100. Arginine 119 provides a ligand contact to N-acetylneuraminate. 3 Ig-like C2-type domains span residues 146–231, 251–339, and 344–441; these read PDVY…RTVR, PALE…LDLS, and PENL…LSLS. Asparagine 355 and asparagine 364 each carry an N-linked (GlcNAc...) asparagine glycan. Residues cysteine 380 and cysteine 425 are joined by a disulfide bond. Residues asparagine 486 and asparagine 504 are each glycosylated (N-linked (GlcNAc...) asparagine). A helical membrane pass occupies residues 551–571; it reads GAFLGIGITALLFLCLALIIM. The Cytoplasmic segment spans residues 572-697; sequence KILPKRRTQT…QADYAEVKFQ (126 aa). The ITIM motif 1 signature appears at 595–600; that stretch reads LDYINV. Positions 606-697 are disordered; that stretch reads PLAQKRNQKA…QADYAEVKFQ (92 aa). The span at 620-629 shows a compositional bias: pro residues; the sequence is PRTPLPPGAP. Over residues 650–659 the composition is skewed to polar residues; that stretch reads KSSTQAPESQ. The ITIM motif 2 motif lies at 665–670; the sequence is LHYATL. At tyrosine 667 the chain carries Phosphotyrosine.

The protein belongs to the immunoglobulin superfamily. SIGLEC (sialic acid binding Ig-like lectin) family. As to quaternary structure, interacts with PTPN6/SHP-1 upon phosphorylation. Interacts with NCF1. Interacts with CD24; the probable CD24:SIGLEC10 complex is proposed to inhibit HGMB1-mediated tissue damage immune response. Interacts with HMGB1; the interaction is dependent on CD24. Interacts with RIGI, CBL and PTPN11. In terms of processing, phosphorylation of Tyr-667 is involved in binding to PTPN6. As to expression, expressed by peripheral blood leukocytes (eosinophils, monocytes and a natural killer cell subpopulation). Isoform 5 is found to be the most abundant isoform. Found in lymph node, lung, ovary and appendix. Isoform 1 is found at high levels and isoform 2 at lower levels in bone marrow, spleen and spinal cord. Isoform 2 is also found in brain. Isoform 4 is specifically found in natural killer cells.

The protein localises to the cell membrane. It localises to the secreted. In terms of biological role, putative adhesion molecule that mediates sialic-acid dependent binding to cells. Preferentially binds to alpha-2,3- or alpha-2,6-linked sialic acid. The sialic acid recognition site may be masked by cis interactions with sialic acids on the same cell surface. In the immune response, seems to act as an inhibitory receptor upon ligand induced tyrosine phosphorylation by recruiting cytoplasmic phosphatase(s) via their SH2 domain(s) that block signal transduction through dephosphorylation of signaling molecules. Involved in negative regulation of B-cell antigen receptor signaling. The inhibition of B cell activation is dependent on PTPN6/SHP-1. In association with CD24 may be involved in the selective suppression of the immune response to danger-associated molecular patterns (DAMPs) such as HMGB1, HSP70 and HSP90. In association with CD24 may regulate the immune repsonse of natural killer (NK) cells. Plays a role in the control of autoimmunity. During initiation of adaptive immune responses by CD8-alpha(+) dendritic cells inhibits cross-presentation by impairing the formation of MHC class I-peptide complexes. The function seems to implicate recruitment of PTPN6/SHP-1, which dephosphorylates NCF1 of the NADPH oxidase complex consequently promoting phagosomal acidification. This is Sialic acid-binding Ig-like lectin 10 (SIGLEC10) from Homo sapiens (Human).